We begin with the raw amino-acid sequence, 450 residues long: Putative gustatory receptor 28a (450 aa).

Over 1 to 47 the chain is Cytoplasmic; the sequence is MAFKLWERFSQADNVFQALRPLTFISLLGLAPFRLNLNPRKEVQTSK. The helical transmembrane segment at 48-68 threads the bilayer; it reads FSFFAGIVHFLFFVLCFGISV. At 69 to 87 the chain is on the extracellular side; sequence KEGDSIIGYFFQTNITRFS. Residue N82 is glycosylated (N-linked (GlcNAc...) asparagine). A helical membrane pass occupies residues 88–108; sequence DGTLRLTGILAMSTIFGFAMF. Topologically, residues 109–138 are cytoplasmic; the sequence is KRQRLVSIIQNNIVVDEIFVRLGMKLDYRR. A helical membrane pass occupies residues 139–159; sequence ILLSSFLISLGMLLFNVIYLC. The Extracellular portion of the chain corresponds to 160-171; that stretch reads VSYSLLVSATIS. Residues 172-192 form a helical membrane-spanning segment; that stretch reads PSFVTFTTFALPHINISLMVF. Over 193–292 the chain is Cytoplasmic; that stretch reads KFLCTTDLAR…CQTIEEYFTY (100 aa). A helical membrane pass occupies residues 293–313; sequence PLLGIIAISFLFILFDDFYIL. The Extracellular portion of the chain corresponds to 314–329; it reads EAILNPKRLDVFEADE. The helical transmembrane segment at 330–350 threads the bilayer; that stretch reads FFAFFLMQLIWYIVIIVLIVE. Residues 351–407 lie on the Cytoplasmic side of the membrane; that stretch reads GSSRTILHSSYTAAIVHKILNITDDPELRDRLFRLSLQLSHRKVLFTAAGLFRLDRT. The helical transmembrane segment at 408 to 424 threads the bilayer; the sequence is LIFTITGAATCYLIILI. Over 425-450 the chain is Extracellular; that stretch reads QFRFTHHMDDTSSNSTNNLHSIHLGD. An N-linked (GlcNAc...) asparagine glycan is attached at N438.

The protein belongs to the insect chemoreceptor superfamily. Gustatory receptor (GR) family. Gr2a subfamily. As to expression, in addition to expression in a large number of taste neurons, Gr28a is also expressed in a few nonchemosensory neurons, including the campaniform sensilla of the wing, leg stretch receptors, and multiple dendritic (MD) neurons in the abdomen. In larvea, is expressed in neurons of the terminal external chemosensory organ, the dorsal external chemosensory organ, as well as in the ventral and posterior pharyngeal sense organ.

It is found in the cell membrane. Its function is as follows. Probable gustatory receptor which mediates acceptance or avoidance behavior, depending on its substrates. Atypical expression also suggests nongustatory roles in the nervous system and tissues involved in proprioception, hygroreception, and other sensory modalities. It is also possible that it has chemosensory roles in the detection of internal ligands. The chain is Putative gustatory receptor 28a (Gr28a) from Drosophila melanogaster (Fruit fly).